The chain runs to 538 residues: Putative cysteine ligase BshC (538 aa).

Residues 248 to 268 adopt a coiled-coil conformation; the sequence is ISKYKEVQEGLRNQQEVIKEL.

Belongs to the BshC family.

Functionally, involved in bacillithiol (BSH) biosynthesis. May catalyze the last step of the pathway, the addition of cysteine to glucosamine malate (GlcN-Mal) to generate BSH. The chain is Putative cysteine ligase BshC from Bacillus cereus (strain ATCC 14579 / DSM 31 / CCUG 7414 / JCM 2152 / NBRC 15305 / NCIMB 9373 / NCTC 2599 / NRRL B-3711).